A 697-amino-acid polypeptide reads, in one-letter code: Long-chain-fatty-acid--CoA ligase 6 (697 aa).

The chain crosses the membrane as a helical; Signal-anchor for type III membrane protein span at residues 25-45; it reads LSATTLVSMGALAAILAYWLT. The Cytoplasmic segment spans residues 46–697; the sequence is HRPKALQPPC…QIEELYSISM (652 aa).

It belongs to the ATP-dependent AMP-binding enzyme family. Mg(2+) is required as a cofactor. Expressed predominantly in brain and, to a much lesser extent, in heart and adrenal.

The protein resides in the mitochondrion outer membrane. It is found in the peroxisome membrane. Its subcellular location is the microsome membrane. The protein localises to the endoplasmic reticulum membrane. The catalysed reaction is a long-chain fatty acid + ATP + CoA = a long-chain fatty acyl-CoA + AMP + diphosphate. It carries out the reaction (5Z,8Z,11Z,14Z)-eicosatetraenoate + ATP + CoA = (5Z,8Z,11Z,14Z)-eicosatetraenoyl-CoA + AMP + diphosphate. The enzyme catalyses 15-hydroxy-(5Z,8Z,11Z,13E)-eicosatetraenoate + ATP + CoA = 15-hydroxy-(5Z,8Z,11Z,13E)-eicosatetraenoyl-CoA + AMP + diphosphate. It catalyses the reaction 12-hydroxy-(5Z,8Z,10E,14Z)-eicosatetraenoate + ATP + CoA = 12-hydroxy-(5Z,8Z,10E,14Z)-eicosatetraenoyl-CoA + AMP + diphosphate. The catalysed reaction is 5-hydroxy-(6E,8Z,11Z,14Z)-eicosatetraenoate + ATP + CoA = 5-hydroxy-(6E,8Z,11Z,14Z)-eicosatetraenoyl-CoA + AMP + diphosphate. It carries out the reaction hexadecanoate + ATP + CoA = hexadecanoyl-CoA + AMP + diphosphate. The enzyme catalyses (E)-hexadec-2-enoate + ATP + CoA = (2E)-hexadecenoyl-CoA + AMP + diphosphate. Catalyzes the conversion of long-chain fatty acids to their active form acyl-CoA for both synthesis of cellular lipids, and degradation via beta-oxidation. Plays an important role in fatty acid metabolism in brain and the acyl-CoAs produced may be utilized exclusively for the synthesis of the brain lipid. The sequence is that of Long-chain-fatty-acid--CoA ligase 6 from Rattus norvegicus (Rat).